Consider the following 118-residue polypeptide: Large ribosomal subunit protein bL19 (118 aa).

Belongs to the bacterial ribosomal protein bL19 family.

In terms of biological role, this protein is located at the 30S-50S ribosomal subunit interface and may play a role in the structure and function of the aminoacyl-tRNA binding site. The polypeptide is Large ribosomal subunit protein bL19 (Teredinibacter turnerae (strain ATCC 39867 / T7901)).